Reading from the N-terminus, the 551-residue chain is Cytochrome c lysine N-methyltransferase 1 (551 aa).

The region spanning 46-273 (DKIELLRVSS…PNTEVLITYK (228 aa)) is the SET domain. The interval 184–288 (IELLRQIYSA…LAMITKYGFD (105 aa)) is SET-like.

This sequence belongs to the class V-like SAM-binding methyltransferase superfamily.

It is found in the cytoplasm. Its subcellular location is the cytosol. The enzyme catalyses L-lysyl-[cytochrome c] + S-adenosyl-L-methionine = N(6)-methyl-L-lysyl-[cytochrome c] + S-adenosyl-L-homocysteine + H(+). In terms of biological role, methyltransferase which mediates trimethylation of cytochrome c (CYC1). The protein is Cytochrome c lysine N-methyltransferase 1 (CTM1) of Candida glabrata (strain ATCC 2001 / BCRC 20586 / JCM 3761 / NBRC 0622 / NRRL Y-65 / CBS 138) (Yeast).